The chain runs to 391 residues: Elongation factor Tu (391 aa).

In terms of domain architecture, tr-type G spans 10–201 (KPHVNIGTVG…AVDEYIPTPE (192 aa)). Residues 19 to 26 (GHVDHGKT) are G1. 19–26 (GHVDHGKT) provides a ligand contact to GTP. A Mg(2+)-binding site is contributed by threonine 26. The segment at 55 to 59 (GITIS) is G2. The interval 76–79 (DCPG) is G3. GTP is bound by residues 76–80 (DCPGH) and 131–134 (NKVD). Positions 131-134 (NKVD) are G4. Residues 169 to 171 (SAL) are G5.

The protein belongs to the TRAFAC class translation factor GTPase superfamily. Classic translation factor GTPase family. EF-Tu/EF-1A subfamily. Monomer.

The protein resides in the cytoplasm. It carries out the reaction GTP + H2O = GDP + phosphate + H(+). Functionally, GTP hydrolase that promotes the GTP-dependent binding of aminoacyl-tRNA to the A-site of ribosomes during protein biosynthesis. This Ruegeria sp. (strain TM1040) (Silicibacter sp.) protein is Elongation factor Tu.